We begin with the raw amino-acid sequence, 260 residues long: Ubiquinone/menaquinone biosynthesis C-methyltransferase UbiE (260 aa).

S-adenosyl-L-methionine contacts are provided by residues Thr83, Asp104, 132-133, and Ser149; that span reads NA.

The protein belongs to the class I-like SAM-binding methyltransferase superfamily. MenG/UbiE family.

The catalysed reaction is a 2-demethylmenaquinol + S-adenosyl-L-methionine = a menaquinol + S-adenosyl-L-homocysteine + H(+). It catalyses the reaction a 2-methoxy-6-(all-trans-polyprenyl)benzene-1,4-diol + S-adenosyl-L-methionine = a 5-methoxy-2-methyl-3-(all-trans-polyprenyl)benzene-1,4-diol + S-adenosyl-L-homocysteine + H(+). Its pathway is quinol/quinone metabolism; menaquinone biosynthesis; menaquinol from 1,4-dihydroxy-2-naphthoate: step 2/2. The protein operates within cofactor biosynthesis; ubiquinone biosynthesis. In terms of biological role, methyltransferase required for the conversion of demethylmenaquinol (DMKH2) to menaquinol (MKH2) and the conversion of 2-polyprenyl-6-methoxy-1,4-benzoquinol (DDMQH2) to 2-polyprenyl-3-methyl-6-methoxy-1,4-benzoquinol (DMQH2). The chain is Ubiquinone/menaquinone biosynthesis C-methyltransferase UbiE from Vibrio vulnificus (strain CMCP6).